A 422-amino-acid polypeptide reads, in one-letter code: Phthiocerol/phthiodiolone dimycocerosyl transferase (422 aa).

The active-site Proton acceptor is histidine 124.

This sequence belongs to the acyltransferase PapA5 family. Monomer. Interacts directly with the acyl carrier protein (ACP) domain of the mycocerosic acid synthase (mas) protein.

It carries out the reaction 2 a mycocerosyl-[mycocerosic acid synthase] + a phthiocerol = a dimycocerosyl phthiocerol + 2 holo-[mycocerosic acid synthase].. The enzyme catalyses 2 a mycocerosyl-[mycocerosic acid synthase] + a phthiodiolone = a dimycocerosyl phthiodiolone + 2 holo-[mycocerosic acid synthase].. It catalyses the reaction 2 a mycocerosyl-[mycocerosic acid synthase] + a phenolphthiocerol = a dimycocerosyl phenolphthiocerol + 2 holo-[mycocerosic acid synthase].. In terms of biological role, catalyzes diesterification of phthiocerol, phthiodiolone, and phenolphthiocerol with mycocerosic acids, the final step in the phthiocerol, phthiodiolone and phenolphthiocerol dimycocerosate esters (PDIM) synthesis. Can directly transfer the mycocerosate bound to the mycocerosic acid synthase (mas) onto the substrate alcohols. This Mycobacterium tuberculosis (strain ATCC 25177 / H37Ra) protein is Phthiocerol/phthiodiolone dimycocerosyl transferase (papA5).